We begin with the raw amino-acid sequence, 128 residues long: Aspartate 1-decarboxylase (128 aa).

Serine 25 serves as the catalytic Schiff-base intermediate with substrate; via pyruvic acid. Serine 25 is modified (pyruvic acid (Ser)). Residue threonine 57 coordinates substrate. Tyrosine 58 functions as the Proton donor in the catalytic mechanism. Residue 73-75 (GAA) participates in substrate binding.

The protein belongs to the PanD family. Heterooctamer of four alpha and four beta subunits. Requires pyruvate as cofactor. In terms of processing, is synthesized initially as an inactive proenzyme, which is activated by self-cleavage at a specific serine bond to produce a beta-subunit with a hydroxyl group at its C-terminus and an alpha-subunit with a pyruvoyl group at its N-terminus.

It localises to the cytoplasm. It carries out the reaction L-aspartate + H(+) = beta-alanine + CO2. The protein operates within cofactor biosynthesis; (R)-pantothenate biosynthesis; beta-alanine from L-aspartate: step 1/1. Functionally, catalyzes the pyruvoyl-dependent decarboxylation of aspartate to produce beta-alanine. This Chlorobaculum parvum (strain DSM 263 / NCIMB 8327) (Chlorobium vibrioforme subsp. thiosulfatophilum) protein is Aspartate 1-decarboxylase.